We begin with the raw amino-acid sequence, 154 residues long: MSTFVQKPAEVEKKWIIIDAEGLVVGRLATIVATRLRGKHKATFTPHVDDGDNVIVINAEKVAFTGKKYSDKKYYWHTGHPGGIKERTARQIIEGRFPERVVEKAIERMIPRGPLGRRQMKNLRVYAGSNHPHEAQQPTVLDVAALNKKNVRSA.

Belongs to the universal ribosomal protein uL13 family. As to quaternary structure, part of the 50S ribosomal subunit.

Its function is as follows. This protein is one of the early assembly proteins of the 50S ribosomal subunit, although it is not seen to bind rRNA by itself. It is important during the early stages of 50S assembly. The polypeptide is Large ribosomal subunit protein uL13 (Agrobacterium fabrum (strain C58 / ATCC 33970) (Agrobacterium tumefaciens (strain C58))).